The sequence spans 513 residues: Sterol 14-alpha demethylase (513 aa).

Residues 10-30 (FTLVSAYAAAGLLAIIVLNLL) traverse the membrane as a helical segment. N-linked (GlcNAc...) asparagine glycosylation is found at asparagine 37 and asparagine 406. Cysteine 453 is a heme binding site.

This sequence belongs to the cytochrome P450 family. Heme is required as a cofactor.

It localises to the endoplasmic reticulum membrane. The enzyme catalyses a 14alpha-methyl steroid + 3 reduced [NADPH--hemoprotein reductase] + 3 O2 = a Delta(14) steroid + formate + 3 oxidized [NADPH--hemoprotein reductase] + 4 H2O + 4 H(+). It carries out the reaction a 14alpha-methyl steroid + reduced [NADPH--hemoprotein reductase] + O2 = a 14alpha-hydroxymethyl steroid + oxidized [NADPH--hemoprotein reductase] + H2O + H(+). The catalysed reaction is a 14alpha-hydroxymethyl steroid + reduced [NADPH--hemoprotein reductase] + O2 = a 14alpha-formyl steroid + oxidized [NADPH--hemoprotein reductase] + 2 H2O + H(+). It catalyses the reaction a 14alpha-formyl steroid + reduced [NADPH--hemoprotein reductase] + O2 = a Delta(14) steroid + formate + oxidized [NADPH--hemoprotein reductase] + H2O + 2 H(+). The enzyme catalyses lanosterol + 3 reduced [NADPH--hemoprotein reductase] + 3 O2 = 4,4-dimethyl-5alpha-cholesta-8,14,24-trien-3beta-ol + formate + 3 oxidized [NADPH--hemoprotein reductase] + 4 H2O + 4 H(+). It carries out the reaction lanosterol + reduced [NADPH--hemoprotein reductase] + O2 = 32-hydroxylanosterol + oxidized [NADPH--hemoprotein reductase] + H2O + H(+). The catalysed reaction is 32-hydroxylanosterol + reduced [NADPH--hemoprotein reductase] + O2 = 32-oxolanosterol + oxidized [NADPH--hemoprotein reductase] + 2 H2O + H(+). It catalyses the reaction 32-oxolanosterol + reduced [NADPH--hemoprotein reductase] + O2 = 4,4-dimethyl-5alpha-cholesta-8,14,24-trien-3beta-ol + formate + oxidized [NADPH--hemoprotein reductase] + H2O + 2 H(+). The enzyme catalyses eburicol + 3 reduced [NADPH--hemoprotein reductase] + 3 O2 = 14-demethyleburicol + formate + 3 oxidized [NADPH--hemoprotein reductase] + 4 H2O + 4 H(+). It carries out the reaction eburicol + reduced [NADPH--hemoprotein reductase] + O2 = 32-hydroxyeburicol + oxidized [NADPH--hemoprotein reductase] + H2O + H(+). The catalysed reaction is 32-hydroxyeburicol + reduced [NADPH--hemoprotein reductase] + O2 = 32-oxoeburicol + oxidized [NADPH--hemoprotein reductase] + 2 H2O + H(+). It catalyses the reaction 32-oxoeburicol + reduced [NADPH--hemoprotein reductase] + O2 = 14-demethyleburicol + formate + oxidized [NADPH--hemoprotein reductase] + H2O + 2 H(+). Its pathway is steroid biosynthesis; sterol biosynthesis. Sterol 14alpha-demethylase, encoded by cyp51A, cyp51B and cyp51C, that plays a critical role in the third module of ergosterol biosynthesis pathway, being ergosterol the major sterol component in fungal membranes that participates in a variety of functions. The third module or late pathway involves the ergosterol synthesis itself through consecutive reactions that mainly occur in the endoplasmic reticulum (ER) membrane. In filamentous fungi, during the initial step of this module, lanosterol (lanosta-8,24-dien-3beta-ol) can be metabolized to eburicol. Sterol 14alpha-demethylase catalyzes the three-step oxidative removal of the 14alpha-methyl group (C-32) of both these sterols in the form of formate, and converts eburicol and lanosterol to 14-demethyleburicol (4,4,24-trimethylergosta-8,14,24(28)-trienol) and 4,4-dimethyl-5alpha-cholesta-8,14,24-trien-3beta-ol, respectively, which are further metabolized by other enzymes in the pathway to ergosterol. Can also use substrates not intrinsic to fungi, such as 24,25-dihydrolanosterol (DHL), producing 4,4'-dimethyl-8,14-cholestadien-3-beta-ol, but at lower rates than the endogenous substrates. Functionally, as a target of azole drugs, plays a crucial role in azole susceptibility. This chain is Sterol 14-alpha demethylase, found in Aspergillus flavus (strain ATCC 200026 / FGSC A1120 / IAM 13836 / NRRL 3357 / JCM 12722 / SRRC 167).